Consider the following 382-residue polypeptide: Histidinol-phosphate aminotransferase (382 aa).

Residues methionine 1 to serine 24 form a disordered region. Over residues proline 9–glycine 22 the composition is skewed to basic and acidic residues. An N6-(pyridoxal phosphate)lysine modification is found at lysine 233.

The protein belongs to the class-II pyridoxal-phosphate-dependent aminotransferase family. Histidinol-phosphate aminotransferase subfamily. Homodimer. The cofactor is pyridoxal 5'-phosphate.

The catalysed reaction is L-histidinol phosphate + 2-oxoglutarate = 3-(imidazol-4-yl)-2-oxopropyl phosphate + L-glutamate. Its pathway is amino-acid biosynthesis; L-histidine biosynthesis; L-histidine from 5-phospho-alpha-D-ribose 1-diphosphate: step 7/9. The chain is Histidinol-phosphate aminotransferase from Mycobacterium ulcerans (strain Agy99).